Consider the following 344-residue polypeptide: MIEVGIVGGTGYTGMELLRLVARHPKLRLAEITSRAEAGTRVDELVPALEGAVDNVFTAPDTERLSRCDVVFFATPNGIAMESAPALLEAGCRVIDLGADFRLRDPAVWTEWYGMSHSCPELLEEAVYGLPEANRDALPGARLVANPGCYPTAVALGLLPLLEAGALADGPVVADCKSGVSGAGRAAKVATLFCEANEGFKAYGASGHRHLPEIEQTLARVAGAPVDVTFVPHLVPMTRGMQATLHVVVDRPLDELEALYRQRYADEPFVHLVASGGHPETRWVRGTNHCRIGLHQPPGRPDRAVILSVIDNLTKGAAGQAVQNLNRMFGLEETAGLEGLAYVP.

Cys149 is a catalytic residue.

It belongs to the NAGSA dehydrogenase family. Type 1 subfamily.

The protein resides in the cytoplasm. It catalyses the reaction N-acetyl-L-glutamate 5-semialdehyde + phosphate + NADP(+) = N-acetyl-L-glutamyl 5-phosphate + NADPH + H(+). It participates in amino-acid biosynthesis; L-arginine biosynthesis; N(2)-acetyl-L-ornithine from L-glutamate: step 3/4. Its function is as follows. Catalyzes the NADPH-dependent reduction of N-acetyl-5-glutamyl phosphate to yield N-acetyl-L-glutamate 5-semialdehyde. In Halorhodospira halophila (strain DSM 244 / SL1) (Ectothiorhodospira halophila (strain DSM 244 / SL1)), this protein is N-acetyl-gamma-glutamyl-phosphate reductase.